A 256-amino-acid chain; its full sequence is GDSL esterase/lipase At1g18120 (256 aa).

The first 49 residues, 1-49, serve as a signal peptide directing secretion; that stretch reads MYRVYKNNKFILISIPRITNKLWQKNCNLVILLGVLLVLTLFHDPIIVA. S67 (nucleophile) is an active-site residue. N181 carries an N-linked (GlcNAc...) asparagine glycan.

It belongs to the 'GDSL' lipolytic enzyme family.

Its subcellular location is the secreted. In Arabidopsis thaliana (Mouse-ear cress), this protein is GDSL esterase/lipase At1g18120.